The chain runs to 1236 residues: DNA topoisomerase 2 (1236 aa).

Residues asparagine 65, asparagine 96, 124 to 126 (SSN), 137 to 144 (GRHGYGAK), and 354 to 356 (QSK) each bind ATP. The region spanning 434–548 (RTLIITEGDS…KLLQNNPGYI (115 aa)) is the Toprim domain. Residues glutamate 440, aspartate 517, and aspartate 519 each contribute to the Mg(2+) site. The Topo IIA-type catalytic domain occupies 685 to 1101 (IPHCVDGLKP…TPVKMWLTEL (417 aa)). Tyrosine 775 functions as the O-(5'-phospho-DNA)-tyrosine intermediate in the catalytic mechanism. An interaction with DNA region spans residues 956 to 965 (ALAQRIYING). Residues 1161–1211 (YEKPPPSKRRPGESVGGARPSDSAARTVGKRLVGSRSEFKNKKPMSRKNNV) are disordered.

This sequence belongs to the type II topoisomerase family. Homodimer. The cofactor is Mg(2+). Requires Mn(2+) as cofactor. Ca(2+) serves as cofactor.

The protein resides in the nucleus. It catalyses the reaction ATP-dependent breakage, passage and rejoining of double-stranded DNA.. In terms of biological role, control of topological states of DNA by transient breakage and subsequent rejoining of DNA strands. Topoisomerase II makes double-strand breaks. In Leishmania chagasi, this protein is DNA topoisomerase 2 (TOP2).